The following is a 249-amino-acid chain: Cobalt transport protein CbiM (249 aa).

The N-terminal stretch at 1–27 (MKPLHRWLPVVIGAALLIIFESRAAYA) is a signal peptide. A run of 6 helical transmembrane segments spans residues 33 to 53 (GFLP…FWVL), 70 to 90 (LLLG…IPSV), 102 to 122 (LGTI…VLLF), 134 to 154 (TLGA…WLIW), 161 to 181 (APIW…TYVV), and 207 to 227 (IFAV…VLIF).

It belongs to the CbiM family. In terms of assembly, forms an energy-coupling factor (ECF) transporter complex composed of an ATP-binding protein (A component, CbiO), a transmembrane protein (T component, CbiQ) and 2 possible substrate-capture proteins (S components, CbiM and CbiN) of unknown stoichimetry.

The protein localises to the cell membrane. Its pathway is cofactor biosynthesis; adenosylcobalamin biosynthesis. In terms of biological role, part of the energy-coupling factor (ECF) transporter complex CbiMNOQ involved in cobalt import. This is Cobalt transport protein CbiM from Roseiflexus sp. (strain RS-1).